The primary structure comprises 448 residues: MDYYQSELIKLFQKSNEIYKDNNFETKLNEKNYKFLLVYLNSIHSILKIDMKLNIYQYINIEFKELILISKELMKIVFDIIHSGTWNNIDILFKDLFAYSSILYIYSFFLIQFKNIKVDNNNNNNININIPNPIKKIILKKLDLALIFGDKLFNQVINQIINLISNNNNNNNNNFLNNFKNENYNNNNENEIILNKEKLIKRISRPPSLNEFKNEYMIKGNPCVIENLMKEWPCFNERNWSDLNYLKNVAGSRLVPIEIGPNYLHEKMKQKLINFNKFIDEYIISKNSDDDNDDIGYLAQTKLFEQIPQLRNDILIPEYCKIKIGCGDDDNDNNKEDNVEINAWLGPKGTVTPLHYDPKHNFLCQIVGRKYIKLFSPKESNNLYPHLNSKLFFNTSMVDVENPDHSKFPLFKNCDYIELILNAGEILYIPPTYWHFVKSLSQSFSIFP.

Residues 305 to 448 (EQIPQLRNDI…SLSQSFSIFP (144 aa)) enclose the JmjC domain.

In Dictyostelium discoideum (Social amoeba), this protein is JmjC domain-containing protein D (jcdD).